The following is a 693-amino-acid chain: Triadin (693 aa).

The Cytoplasmic segment spans residues 1 to 47 (MTEITAEGNASTTTTVIDNKNGCIPKSPGKVLKRSVTEDIVTTFSSP). Residues 48–68 (AAWLLVIALIITWSAVAIVMF) traverse the membrane as a helical segment. At 69-693 (DLVDYKNFSA…NSPGQKQQEQ (625 aa)) the chain is on the lumenal side. Positions 117–130 (EGDEDDEDADEDID) are enriched in acidic residues. Disordered regions lie at residues 117–260 (EGDE…AVHE), 278–649 (GDLK…QTRP), and 666–693 (FQFPVTPVQQPGENPGKTNSPGQKQQEQ). Composition is skewed to basic and acidic residues over residues 131 to 241 (KGEI…KETP) and 249 to 260 (KKDDKEMPAVHE). Ser-301 carries the phosphoserine modification. Residues 305–352 (LEEKEKEEKKKMEKKDTSDTKKKEKEVKKKSEETTIDGKGKEPGKPPE) show a composition bias toward basic and acidic residues. A compositionally biased stretch (polar residues) spans 354 to 364 (KQMTAKLTTQA). 2 stretches are compositionally biased toward basic and acidic residues: residues 366–427 (ARKD…KEEI) and 438–502 (GKKE…KEAK). The N-linked (GlcNAc...) asparagine glycan is linked to Asn-515. Composition is skewed to basic and acidic residues over residues 526 to 547 (VKPEKAEHQEKGHPSIKKDKPK) and 558 to 579 (DSGKKKIEKSEKESKVPTREEN). Residue Asn-584 is glycosylated (N-linked (GlcNAc...) asparagine). The segment covering 587-637 (KAEKPGKIPKDSKEAPASKKDKEDSKEAPTSKKDKEDSKDVPHSKKDKEVT) has biased composition (basic and acidic residues). Residues 672 to 693 (PVQQPGENPGKTNSPGQKQQEQ) show a composition bias toward polar residues.

Homooligomer of variable subunit number; disulfide-linked. Interacts with CASQ1 and RYR1 in skeletal muscle. Interacts with CASQ2. Phosphorylated by CaMK2. In terms of processing, N-glycosylated. As to expression, detected in heart (at protein level). Detected in heart.

It localises to the sarcoplasmic reticulum membrane. Contributes to the regulation of lumenal Ca2+ release via the sarcoplasmic reticulum calcium release channels RYR1 and RYR2, a key step in triggering skeletal and heart muscle contraction. Required for normal organization of the triad junction, where T-tubules and the sarcoplasmic reticulum terminal cisternae are in close contact. Required for normal skeletal muscle strength. Plays a role in excitation-contraction coupling in the heart and in regulating the rate of heart beats. This chain is Triadin, found in Mus musculus (Mouse).